The chain runs to 106 residues: Iron-sulfur cluster assembly protein CyaY (106 aa).

It belongs to the frataxin family.

Involved in iron-sulfur (Fe-S) cluster assembly. May act as a regulator of Fe-S biogenesis. The sequence is that of Iron-sulfur cluster assembly protein CyaY from Escherichia fergusonii (strain ATCC 35469 / DSM 13698 / CCUG 18766 / IAM 14443 / JCM 21226 / LMG 7866 / NBRC 102419 / NCTC 12128 / CDC 0568-73).